Here is a 165-residue protein sequence, read N- to C-terminus: Pro-MCH (165 aa).

The first 21 residues, 1 to 21 (MAKMNLSSYILILTFSLFSQG), serve as a signal peptide directing secretion. Ile143 is modified (isoleucine amide). The cysteines at positions 153 and 162 are disulfide-linked.

This sequence belongs to the melanin-concentrating hormone family. Differentially processed in the brain and in peripheral organs producing two neuropeptides; NEI and MCH. A third peptide, NGE, may also be produced. Preferential processing in neurons by prohormone convertase 2 (PC2) generates NEI. MCH is generated in neurons of the lateral hypothalmic area by several prohormone convertases including PC1/3, PC2 and PC5/6. Predominantly expressed in lateral hypothalamus, also detected in pallidum, neocortex and cerebellum. Also found in thymus, brown adipose tissue, duodenum and testis (spermatogonia, early spermatocytes and Sertoli cells). No expression in peripheral blood. In brain exclusively mature MCH and NEI peptides are present. In peripheral tissues a large product, encompassing the NEI and MCH domains of the precursor, is found predominantly.

The protein resides in the secreted. In terms of biological role, MCH may act as a neurotransmitter or neuromodulator in a broad array of neuronal functions directed toward the regulation of goal-directed behavior, such as food intake, and general arousal. May also have a role in spermatocyte differentiation. This chain is Pro-MCH (PMCH), found in Homo sapiens (Human).